The sequence spans 690 residues: Exonuclease GOR (690 aa).

2 disordered regions span residues 136 to 162 (TRVA…NRSG) and 567 to 690 (QPRH…SLHH). Over residues 585-595 (APSTTAISPES) the composition is skewed to polar residues. Over residues 605–614 (KETGAVDGRR) the composition is skewed to basic and acidic residues. Positions 612–626 (GRRGQKAKSNPNRPL) are GOR14-1 epitope. Residues 631-646 (NPCRGPSGLSPSLCPS) are compositionally biased toward low complexity. Over residues 661–682 (PPLPVPRVPAAPPRACPHPSAH) the composition is skewed to pro residues.

Belongs to the REXO1/REXO3 family.

It is found in the cytoplasm. The protein resides in the nucleus. The sequence is that of Exonuclease GOR (REXO1L1) from Pan troglodytes (Chimpanzee).